A 177-amino-acid polypeptide reads, in one-letter code: Large ribosomal subunit protein uL6 (177 aa).

This sequence belongs to the universal ribosomal protein uL6 family. Part of the 50S ribosomal subunit.

This protein binds to the 23S rRNA, and is important in its secondary structure. It is located near the subunit interface in the base of the L7/L12 stalk, and near the tRNA binding site of the peptidyltransferase center. In Rhizobium etli (strain ATCC 51251 / DSM 11541 / JCM 21823 / NBRC 15573 / CFN 42), this protein is Large ribosomal subunit protein uL6.